A 751-amino-acid polypeptide reads, in one-letter code: E3 ubiquitin-protein ligase SMURF2 (751 aa).

The C2 domain occupies 1 to 119; sequence MSNQGSRRNG…TGYQRLDLCK (119 aa). Residues 157-190 enclose the WW 1 domain; the sequence is NDLPDGWEERRTASGRIQYLNHITRTTQWERPTR. Polar residues predominate over residues 214–226; that stretch reads GTNGASCGQTSDP. Residues 214–236 form a disordered region; that stretch reads GTNGASCGQTSDPRISERRVRSQ. WW domains follow at residues 251 to 284 and 297 to 330; these read PDLP…DPRV and GPLP…DPRL. In terms of domain architecture, HECT spans 417-751; it reads RPKDLWKRLM…IEETCGFAVE (335 aa). Catalysis depends on Cys-719, which acts as the Glycyl thioester intermediate.

The protein localises to the nucleus. It is found in the cytoplasm. Its subcellular location is the cell membrane. The protein resides in the membrane raft. It carries out the reaction S-ubiquitinyl-[E2 ubiquitin-conjugating enzyme]-L-cysteine + [acceptor protein]-L-lysine = [E2 ubiquitin-conjugating enzyme]-L-cysteine + N(6)-ubiquitinyl-[acceptor protein]-L-lysine.. Its pathway is protein modification; protein ubiquitination. Its function is as follows. E3 ubiquitin-protein ligase which accepts ubiquitin from an E2 ubiquitin-conjugating enzyme in the form of a thioester and then directly transfers the ubiquitin to targeted substrates. This is E3 ubiquitin-protein ligase SMURF2 (smurf2) from Xenopus laevis (African clawed frog).